Here is a 139-residue protein sequence, read N- to C-terminus: Fluoroacetyl-CoA thioesterase (139 aa).

Substrate is bound by residues 40–50 (FATGFMVGLME) and Gly69. Catalysis depends on residues Thr42 and Glu50. Residues Gly69 and 76–77 (HT) contribute to the CoA site. His76 is a catalytic residue. Substrate is bound at residue Arg120.

As to quaternary structure, homodimer.

It carries out the reaction fluoroacetyl-CoA + H2O = fluoroacetate + CoA + H(+). Functionally, hydrolyzes fluoroacetyl-CoA before it can react with citrate synthase, and thus confers fluoroacetate resistance. Cannot use acetyl-CoA as substrate. The protein is Fluoroacetyl-CoA thioesterase (flK) of Streptantibioticus cattleyicolor (Streptomyces cattleya).